The following is a 187-amino-acid chain: dCTP deaminase (187 aa).

DCTP is bound by residues 110–115, 134–136, Q155, Y169, and Q179; these read KSTYAR and TLE. E136 functions as the Proton donor/acceptor in the catalytic mechanism.

It belongs to the dCTP deaminase family. Homotrimer.

The catalysed reaction is dCTP + H2O + H(+) = dUTP + NH4(+). It functions in the pathway pyrimidine metabolism; dUMP biosynthesis; dUMP from dCTP (dUTP route): step 1/2. Catalyzes the deamination of dCTP to dUTP. The chain is dCTP deaminase from Bordetella pertussis (strain Tohama I / ATCC BAA-589 / NCTC 13251).